The primary structure comprises 356 residues: S-adenosylmethionine:tRNA ribosyltransferase-isomerase (356 aa).

Belongs to the QueA family. Monomer.

Its subcellular location is the cytoplasm. It carries out the reaction 7-aminomethyl-7-carbaguanosine(34) in tRNA + S-adenosyl-L-methionine = epoxyqueuosine(34) in tRNA + adenine + L-methionine + 2 H(+). The protein operates within tRNA modification; tRNA-queuosine biosynthesis. Transfers and isomerizes the ribose moiety from AdoMet to the 7-aminomethyl group of 7-deazaguanine (preQ1-tRNA) to give epoxyqueuosine (oQ-tRNA). The polypeptide is S-adenosylmethionine:tRNA ribosyltransferase-isomerase (Xanthomonas oryzae pv. oryzae (strain KACC10331 / KXO85)).